Here is a 360-residue protein sequence, read N- to C-terminus: Peptide chain release factor 1 (360 aa).

Gln-237 is modified (N5-methylglutamine).

Belongs to the prokaryotic/mitochondrial release factor family. Methylated by PrmC. Methylation increases the termination efficiency of RF1.

It localises to the cytoplasm. Peptide chain release factor 1 directs the termination of translation in response to the peptide chain termination codons UAG and UAA. This chain is Peptide chain release factor 1 (prfA), found in Pseudomonas aeruginosa (strain ATCC 15692 / DSM 22644 / CIP 104116 / JCM 14847 / LMG 12228 / 1C / PRS 101 / PAO1).